Consider the following 690-residue polypeptide: MKLLLLSALLGCLATAYAAPAEGIVKWCVKSEQELRKCHDLAAKVAEFSCVRKDGSFECIQAIKGGEADAITLDGGDIYTAGLTNYGLQPIIAEDYGEDSDTCYYAVAVAKKGTAFGFKTLRGKKSCHTGLGKSAGWNIPIGTLVTESQIRWAGIEDRPVESAVSDFFNASCAPGATMGSKLCQLCKGDCSRSHKEPYYDYAGAFQCLKDGAGDVAFIKPLAVPAAEKASYELLCKDGTRASIDSYKTCHLARVPAHAVVSRKDPELANRIYNKLVAVKDFNLFSSDGYAAKNLMFKDSAQKLVQLPTTTDSFLYLGAEYMSTIRSLKKSQATGASSRAIKWCAVGHAEKGKCDTWTINSFADGESKISCQDAPTVEECIKKIMRKEADAIAVDGGEVYTAGKCGLVPVMVEQYDADLCSAPGEASSYYAVAVAKKGSGLTWKTLKGKRSCHTGLGRTAGWNIPMGLIHQETNDCDFTKYFSKGCAPGSEVGSPFCAQCKGSGKAVGDEYRCKARSEEQYYGYTGAFRCLVEDAGDVAFIKHTIVPESTDGNGPDWAKDLKSSDFELLCQDGTTQPVTKFSECHLAKVPAHAVITRPETRGDVVSILLELQAKFGSSGSDSSFRMFQSSVEKNLLFKDSTKCLQEIPKGTKYQDFLGKEYMIAMQSLRKCSDSTSDLEKACTFHSCQQKE.

Positions Met1 to Ala18 are cleaved as a signal peptide. 2 Transferrin-like domains span residues Val25–Lys329 and Ile340–Lys669. A disulfide bridge connects residues Cys28 and Cys50. 2 residues coordinate Fe(3+): Asp74 and Tyr104. 3 cysteine pairs are disulfide-bonded: Cys127-Cys207, Cys172-Cys186, and Cys235-Cys249. Residues Thr129, Ser134, Gly136, and Trp137 each coordinate hydrogencarbonate. Asn169 carries an N-linked (GlcNAc...) asparagine glycan. Tyr201 is a binding site for Fe(3+). His257 serves as a coordination point for Fe(3+). 2 cysteine pairs are disulfide-bonded: Cys343/Cys379 and Cys353/Cys370. Residues Asp394 and Tyr428 each contribute to the Fe(3+) site. 7 cysteine pairs are disulfide-bonded: Cys404-Cys681, Cys419-Cys642, Cys451-Cys529, Cys475-Cys670, Cys485-Cys499, Cys496-Cys512, and Cys569-Cys583. Positions 453, 457, 459, and 460 each coordinate hydrogencarbonate. Tyr523 provides a ligand contact to Fe(3+). His591 is a binding site for Fe(3+).

This sequence belongs to the transferrin family. Monomer. As to expression, abundant in liver and serum with smaller amounts found in the stomach and kidney.

It localises to the secreted. Its function is as follows. Transferrins are iron binding transport proteins which can bind two Fe(3+) ions in association with the binding of an anion, usually bicarbonate. It is responsible for the transport of iron from sites of absorption and heme degradation to those of storage and utilization. Serum transferrin may also have a further role in stimulating cell proliferation. The polypeptide is Serotransferrin-1 (tf1) (Salmo salar (Atlantic salmon)).